The primary structure comprises 68 residues: MIFPIRCFSCGNVISEVYDEYKTRLSNVESPEEILNDLGVTKYCCRRMFASHRLENGKELFDDIVEYR.

The Zn(2+) site is built by C7, C10, C44, and C45.

It belongs to the archaeal Rpo10/eukaryotic RPB10 RNA polymerase subunit family. Part of the RNA polymerase complex. Requires Zn(2+) as cofactor.

The protein localises to the cytoplasm. The catalysed reaction is RNA(n) + a ribonucleoside 5'-triphosphate = RNA(n+1) + diphosphate. Its function is as follows. DNA-dependent RNA polymerase (RNAP) catalyzes the transcription of DNA into RNA using the four ribonucleoside triphosphates as substrates. The protein is DNA-directed RNA polymerase subunit Rpo10 of Methanococcus vannielii (strain ATCC 35089 / DSM 1224 / JCM 13029 / OCM 148 / SB).